Consider the following 113-residue polypeptide: Retrotransposon Gag-like protein 8 (113 aa).

The protein belongs to the FAM127 family.

This is Retrotransposon Gag-like protein 8 (RTL8A) from Bos taurus (Bovine).